The primary structure comprises 143 residues: MNTYTVKASDIKRDWHVIDASGRVLGEVAAEAAKYLMGKHKPMFCRNLDCGDYVVIVNAKKITVTGNKLDQKMYYRHSGFPGGFRQEKLGDLLKTKPLFVIEHAVKGMIPRNTLGAQILAKLKVYEGAEHPHASQTGVVSKES.

The protein belongs to the universal ribosomal protein uL13 family. As to quaternary structure, part of the 50S ribosomal subunit.

This protein is one of the early assembly proteins of the 50S ribosomal subunit, although it is not seen to bind rRNA by itself. It is important during the early stages of 50S assembly. This is Large ribosomal subunit protein uL13 from Dehalococcoides mccartyi (strain ATCC BAA-2100 / JCM 16839 / KCTC 5957 / BAV1).